The primary structure comprises 232 residues: 5'-methylthioadenosine/S-adenosylhomocysteine nucleosidase (232 aa).

Residue glutamate 12 is the Proton acceptor of the active site. Substrate contacts are provided by residues glycine 78, valine 153, and 174–175; that span reads ME. Aspartate 198 acts as the Proton donor in catalysis.

This sequence belongs to the PNP/UDP phosphorylase family. MtnN subfamily.

The catalysed reaction is S-adenosyl-L-homocysteine + H2O = S-(5-deoxy-D-ribos-5-yl)-L-homocysteine + adenine. The enzyme catalyses S-methyl-5'-thioadenosine + H2O = 5-(methylsulfanyl)-D-ribose + adenine. It catalyses the reaction 5'-deoxyadenosine + H2O = 5-deoxy-D-ribose + adenine. It participates in amino-acid biosynthesis; L-methionine biosynthesis via salvage pathway; S-methyl-5-thio-alpha-D-ribose 1-phosphate from S-methyl-5'-thioadenosine (hydrolase route): step 1/2. Catalyzes the irreversible cleavage of the glycosidic bond in both 5'-methylthioadenosine (MTA) and S-adenosylhomocysteine (SAH/AdoHcy) to adenine and the corresponding thioribose, 5'-methylthioribose and S-ribosylhomocysteine, respectively. Also cleaves 5'-deoxyadenosine, a toxic by-product of radical S-adenosylmethionine (SAM) enzymes, into 5-deoxyribose and adenine. The polypeptide is 5'-methylthioadenosine/S-adenosylhomocysteine nucleosidase (Photobacterium profundum (strain SS9)).